Reading from the N-terminus, the 217-residue chain is Dense granule protein 1 (217 aa).

The N-terminal stretch at 1 to 19 (MARQATFIVALCVCGLAIA) is a signal peptide. The span at 171-183 (VASEDSALGNSEE) shows a compositional bias: polar residues. Positions 171–217 (VASEDSALGNSEEQYVEGTVNGSSDPEQERAGGPLIPEGDEQEVDTE) are disordered. N191 carries N-linked (GlcNAc...) asparagine glycosylation. Over residues 208 to 217 (EGDEQEVDTE) the composition is skewed to acidic residues.

The protein belongs to the Gra7 family.

It localises to the secreted. The polypeptide is Dense granule protein 1 (DG1) (Neospora caninum (Coccidian parasite)).